We begin with the raw amino-acid sequence, 2103 residues long: uncharacterized protein (2103 aa).

Over residues 1 to 12 the composition is skewed to low complexity; it reads MSVPGTPGAMEP. Residues 1–61 form a disordered region; it reads MSVPGTPGAM…DADDQEEEME (61 aa). Residues 51–61 show a composition bias toward acidic residues; the sequence is EDADDQEEEME. In terms of domain architecture, Bromo spans 77–196; that stretch reads YELQQGYRIL…MMLEQKLALL (120 aa). Disordered regions lie at residues 730–750, 853–881, 933–956, 1224–1244, and 1770–1817; these read AKHK…ITKK, NREL…SIDS, QSKQ…AKLS, SASP…TLNG, and GATR…STSP. Residues 865-877 show a composition bias toward basic and acidic residues; that stretch reads DLGKDSPKGEISK. Positions 1224–1234 are enriched in polar residues; the sequence is SASPTISSTGQ. Residues 1235 to 1244 show a composition bias toward low complexity; it reads PLSSTTTLNG. Residues 1773–1794 are compositionally biased toward polar residues; it reads RSVSISKRQSRTSLQFHSPGIS. Residues 1795–1808 are compositionally biased toward low complexity; that stretch reads TTVPTNVNTNKPQT.

It is found in the nucleus. This is an uncharacterized protein from Homo sapiens (Human).